A 367-amino-acid chain; its full sequence is Mitogen-activated protein kinase 12 (367 aa).

In terms of domain architecture, Protein kinase spans 27-311 (YQDLQPVGSG…AAEALAHPYF (285 aa)). Residues 33-41 (VGSGAYGAV) and Lys56 each bind ATP. The active-site Proton acceptor is Asp153. A Phosphothreonine; by MAP2K3 and MAP2K6 modification is found at Thr183. Positions 183 to 185 (TGY) match the TXY motif. Phosphotyrosine; by MAP2K3 and MAP2K6 is present on Tyr185.

Belongs to the protein kinase superfamily. CMGC Ser/Thr protein kinase family. MAP kinase subfamily. Monomer. Interacts with the PDZ domain of the syntrophin SNTA1. Interacts with LIN7C, SCRIB, SYNJ2BP and SH3BP5. Interacts with PTPN4; this interaction induces the activation of PTPN4 phosphatase activity. Requires Mg(2+) as cofactor. Dually phosphorylated on Thr-183 and Tyr-185 by MAP2K3/MKK3 and MAP2K6/MKK6, which activates the enzyme. In terms of processing, ubiquitinated. Ubiquitination leads to degradation by the proteasome pathway. In terms of tissue distribution, highly expressed in skeletal muscle, lung and testes and also in the heart and thymus of both adult and neonatal rats.

The protein resides in the cytoplasm. Its subcellular location is the nucleus. The protein localises to the mitochondrion. The enzyme catalyses L-seryl-[protein] + ATP = O-phospho-L-seryl-[protein] + ADP + H(+). It carries out the reaction L-threonyl-[protein] + ATP = O-phospho-L-threonyl-[protein] + ADP + H(+). Its activity is regulated as follows. Activated by phosphorylation on threonine and tyrosine. MAP2K3/MKK3 and MAP2K6/MKK6 are both essential for the activation of MAPK12 induced by environmental stress, whereas MAP2K6/MKK6 is the major MAPK12 activator in response to TNF-alpha. In terms of biological role, serine/threonine kinase which acts as an essential component of the MAP kinase signal transduction pathway. MAPK12 is one of the four p38 MAPKs which play an important role in the cascades of cellular responses evoked by extracellular stimuli such as pro-inflammatory cytokines or physical stress leading to direct activation of transcription factors such as ELK1 and ATF2. Accordingly, p38 MAPKs phosphorylate a broad range of proteins and it has been estimated that they may have approximately 200 to 300 substrates each. Some of the targets are downstream kinases such as MAPKAPK2, which are activated through phosphorylation and further phosphorylate additional targets. Plays a role in myoblast differentiation and also in the down-regulation of cyclin D1 in response to hypoxia in adrenal cells suggesting MAPK12 may inhibit cell proliferation while promoting differentiation. Phosphorylates DLG1. Following osmotic shock, MAPK12 in the cell nucleus increases its association with nuclear DLG1, thereby causing dissociation of DLG1-SFPQ complexes. This function is independent of its catalytic activity and could affect mRNA processing and/or gene transcription to aid cell adaptation to osmolarity changes in the environment. Regulates UV-induced checkpoint signaling and repair of UV-induced DNA damage and G2 arrest after gamma-radiation exposure. MAPK12 is involved in the regulation of SLC2A1 expression and basal glucose uptake in L6 myotubes; and negatively regulates SLC2A4 expression and contraction-mediated glucose uptake in adult skeletal muscle. C-Jun (JUN) phosphorylation is stimulated by MAPK14 and inhibited by MAPK12, leading to a distinct AP-1 regulation. MAPK12 is required for the normal kinetochore localization of PLK1, prevents chromosomal instability and supports mitotic cell viability. MAPK12-signaling is also positively regulating the expansion of transient amplifying myogenic precursor cells during muscle growth and regeneration. This chain is Mitogen-activated protein kinase 12 (Mapk12), found in Rattus norvegicus (Rat).